The chain runs to 314 residues: Acetyl-coenzyme A carboxylase carboxyl transferase subunit alpha (314 aa).

The region spanning 38 to 292 (RLERKSAALL…ANAIDEELDA (255 aa)) is the CoA carboxyltransferase C-terminal domain.

This sequence belongs to the AccA family. As to quaternary structure, acetyl-CoA carboxylase is a heterohexamer composed of biotin carboxyl carrier protein (AccB), biotin carboxylase (AccC) and two subunits each of ACCase subunit alpha (AccA) and ACCase subunit beta (AccD).

It localises to the cytoplasm. The enzyme catalyses N(6)-carboxybiotinyl-L-lysyl-[protein] + acetyl-CoA = N(6)-biotinyl-L-lysyl-[protein] + malonyl-CoA. The protein operates within lipid metabolism; malonyl-CoA biosynthesis; malonyl-CoA from acetyl-CoA: step 1/1. Functionally, component of the acetyl coenzyme A carboxylase (ACC) complex. First, biotin carboxylase catalyzes the carboxylation of biotin on its carrier protein (BCCP) and then the CO(2) group is transferred by the carboxyltransferase to acetyl-CoA to form malonyl-CoA. The chain is Acetyl-coenzyme A carboxylase carboxyl transferase subunit alpha from Erythrobacter litoralis (strain HTCC2594).